We begin with the raw amino-acid sequence, 51 residues long: Large ribosomal subunit protein eL39 (51 aa).

The protein belongs to the eukaryotic ribosomal protein eL39 family.

The chain is Large ribosomal subunit protein eL39 from Methanopyrus kandleri (strain AV19 / DSM 6324 / JCM 9639 / NBRC 100938).